Reading from the N-terminus, the 568-residue chain is Urease subunit alpha (568 aa).

The Urease domain maps to 131-568 (GGMDAHIHFI…LPLAQRYFLY (438 aa)). The Ni(2+) site is built by His-136, His-138, and Lys-219. Lys-219 is modified (N6-carboxylysine). His-221 provides a ligand contact to substrate. Positions 248 and 274 each coordinate Ni(2+). The active-site Proton donor is His-322. A Ni(2+)-binding site is contributed by Asp-362.

The protein belongs to the metallo-dependent hydrolases superfamily. Urease alpha subunit family. Heterotrimer of UreA (gamma), UreB (beta) and UreC (alpha) subunits. Three heterotrimers associate to form the active enzyme. It depends on Ni cation as a cofactor. In terms of processing, carboxylation allows a single lysine to coordinate two nickel ions.

It is found in the cytoplasm. The catalysed reaction is urea + 2 H2O + H(+) = hydrogencarbonate + 2 NH4(+). The protein operates within nitrogen metabolism; urea degradation; CO(2) and NH(3) from urea (urease route): step 1/1. This is Urease subunit alpha from Cereibacter sphaeroides (strain KD131 / KCTC 12085) (Rhodobacter sphaeroides).